The chain runs to 532 residues: Vesicular acetylcholine transporter (532 aa).

Over 1 to 33 the chain is Cytoplasmic; that stretch reads MESAEPAGQARAAATKLSEAVGAALQEPRRQRR. The chain crosses the membrane as a helical span at residues 34 to 54; that stretch reads LVLVIVCVALLLDNMLYMVIV. The Lumenal, vesicle portion of the chain corresponds to 55 to 125; sequence PIVPDYIAHM…PTESEDVKIG (71 aa). Residues asparagine 89 and asparagine 96 are each glycosylated (N-linked (GlcNAc...) asparagine). A helical membrane pass occupies residues 126–146; sequence VLFASKAILQLLVNPLSGPFI. At 147–152 the chain is on the cytoplasmic side; sequence DRMSYD. The helical transmembrane segment at 153-173 threads the bilayer; the sequence is VPLLIGLGVMFASTVLFAFAE. Topologically, residues 174–182 are lumenal, vesicle; the sequence is DYATLFAAR. Residues 183–203 form a helical membrane-spanning segment; sequence SLQGLGSAFADTSGIAMIADK. The Cytoplasmic portion of the chain corresponds to 204-213; sequence YPEEPERSRA. The helical transmembrane segment at 214-234 threads the bilayer; that stretch reads LGVALAFISFGSLVAPPFGGI. Residues 235–242 are Lumenal, vesicle-facing; that stretch reads LYEFAGKR. The helical transmembrane segment at 243–263 threads the bilayer; sequence VPFLVLAAVSLFDALLLLAVA. Topologically, residues 264-289 are cytoplasmic; it reads KPFSAAARARANLPVGTPIHRLMLDP. A helical transmembrane segment spans residues 290–310; that stretch reads YIAVVAGALTTCNIPLAFLEP. Residues 311 to 325 are Lumenal, vesicle-facing; the sequence is TIATWMKHTMAASEW. A helical transmembrane segment spans residues 326–346; it reads EMGMAWLPAFVPHVLGVYLTV. At 347–356 the chain is on the cytoplasmic side; the sequence is RLAARYPHLQ. A helical transmembrane segment spans residues 357–377; the sequence is WLYGALGLAVIGASSCIVPAC. Over 378 to 388 the chain is Lumenal, vesicle; that stretch reads RSFAPLVVSLC. The chain crosses the membrane as a helical span at residues 389 to 409; the sequence is GLCFGIALVDTALLPTLAFLV. The Cytoplasmic segment spans residues 410–422; that stretch reads DVRHVSVYGSVYA. The chain crosses the membrane as a helical span at residues 423-443; that stretch reads IADISYSVAYALGPIVAGHIV. The Lumenal, vesicle portion of the chain corresponds to 444–447; sequence HSLG. A helical membrane pass occupies residues 448–468; the sequence is FEQLSLGMGLANLLYAPVLLL. At 469 to 532 the chain is on the cytoplasmic side; the sequence is LRNVGLLTRS…DDYNYYYTRS (64 aa). The segment at 471–532 is mediates interaction with SEC14L1; the sequence is NVGLLTRSRS…DDYNYYYTRS (62 aa). Residues 502 to 523 form a disordered region; it reads RPVSGQDGEPRSPPGPFDACED.

The protein belongs to the major facilitator superfamily. Vesicular transporter family. In terms of assembly, interacts with SEC14L1. Peripheral and central cholinergic nervous systems.

It is found in the cytoplasmic vesicle. The protein localises to the secretory vesicle. Its subcellular location is the synaptic vesicle membrane. The catalysed reaction is acetylcholine(out) + 2 H(+)(in) = acetylcholine(in) + 2 H(+)(out). It carries out the reaction choline(in) + 2 H(+)(out) = choline(out) + 2 H(+)(in). It catalyses the reaction serotonin(in) + 2 H(+)(out) = serotonin(out) + 2 H(+)(in). Potently inhibited by L-vesamicol, reserpine and tetrabenazine. In terms of biological role, electrogenic antiporter that exchanges one cholinergic neurotransmitter, acetylcholine or choline, with two intravesicular protons across the membrane of synaptic vesicles. Uses the electrochemical proton gradient established by the V-type proton-pump ATPase to store neurotransmitters inside the vesicles prior to their release via exocytosis. Determines cholinergic vesicular quantal size at presynaptic nerve terminals in developing neuro-muscular junctions with an impact on motor neuron differentiation and innervation pattern. Part of forebrain cholinergic system, regulates hippocampal synapse transmissions that underlie spatial memory formation. Can transport serotonin. The protein is Vesicular acetylcholine transporter (SLC18A3) of Homo sapiens (Human).